A 163-amino-acid polypeptide reads, in one-letter code: NADH-quinone oxidoreductase subunit I (163 aa).

2 4Fe-4S ferredoxin-type domains span residues 53 to 83 and 94 to 123; these read LRRYPNGEERCIACKLCEAICPAQAITIEAG and VRYDIDMVKCIYCGFCQEACPVEAIVEGPN. [4Fe-4S] cluster-binding residues include Cys-63, Cys-66, Cys-69, Cys-73, Cys-103, Cys-106, Cys-109, and Cys-113.

Belongs to the complex I 23 kDa subunit family. As to quaternary structure, NDH-1 is composed of 14 different subunits. Subunits NuoA, H, J, K, L, M, N constitute the membrane sector of the complex. Requires [4Fe-4S] cluster as cofactor.

It localises to the cell inner membrane. The enzyme catalyses a quinone + NADH + 5 H(+)(in) = a quinol + NAD(+) + 4 H(+)(out). Functionally, NDH-1 shuttles electrons from NADH, via FMN and iron-sulfur (Fe-S) centers, to quinones in the respiratory chain. The immediate electron acceptor for the enzyme in this species is believed to be ubiquinone. Couples the redox reaction to proton translocation (for every two electrons transferred, four hydrogen ions are translocated across the cytoplasmic membrane), and thus conserves the redox energy in a proton gradient. The chain is NADH-quinone oxidoreductase subunit I from Bartonella quintana (strain Toulouse) (Rochalimaea quintana).